The primary structure comprises 269 residues: MSFTKIAALLAVAAASTQLVSAEVGQYEIVEFDAILADVKANLEQYMSLAMNNPDFTLPSGVLDVYQHMTTATDDSYTSYFTEMDFAQITTAMVQVPWYSSRLEPEIIAALQSAGISITSLGQTVSESGSESATASSDASSASESSSAASSSASESSSAASSSASESSSAASSSASESSSAASSSASEAAKSSSSAKSSGSSAASSAASSASSKASSAASSSAKASSSAEKSTNSSSSATSKNAGAAMDMGFFSAGVGAAIAGAAAMLL.

An N-terminal signal peptide occupies residues 1 to 22 (MSFTKIAALLAVAAASTQLVSA). The segment at 128 to 242 (SGSESATASS…TNSSSSATSK (115 aa)) is disordered. A glycan (N-linked (GlcNAc...) asparagine) is linked at Asn-234. A lipid anchor (GPI-anchor amidated glycine) is attached at Gly-245. Positions 246 to 269 (AAMDMGFFSAGVGAAIAGAAAMLL) are cleaved as a propeptide — removed in mature form.

The protein belongs to the SRP1/TIP1 family. In terms of processing, extensively O-glycosylated. Post-translationally, the GPI-anchor is attached to the protein in the endoplasmic reticulum and serves to target the protein to the cell surface. There, the glucosamine-inositol phospholipid moiety is cleaved off and the GPI-modified mannoprotein is covalently attached via its lipidless GPI glycan remnant to the 1,6-beta-glucan of the outer cell wall layer.

The protein resides in the secreted. It is found in the cell wall. Its subcellular location is the membrane. Component of the cell wall. Required for anaerobic growth. In Saccharomyces cerevisiae (strain ATCC 204508 / S288c) (Baker's yeast), this protein is Cell wall protein TIR3 (TIR3).